The sequence spans 360 residues: Putative transcription factor A494R (360 aa).

Residues Cys-153–Cys-175 fold into a zinc finger.

This sequence belongs to the nucleo-cytoplasmic large DNA viruses (NCLDVs) VLTF-3 family.

Putative transcription factor. The chain is Putative transcription factor A494R from Paramecium bursaria Chlorella virus 1 (PBCV-1).